Reading from the N-terminus, the 80-residue chain is Acyl carrier protein (80 aa).

Residues 4–79 form the Carrier domain; it reads DEVKGQVYDI…DAINYIVEKK (76 aa). Serine 39 carries the O-(pantetheine 4'-phosphoryl)serine modification.

It belongs to the acyl carrier protein (ACP) family. In terms of processing, 4'-phosphopantetheine is transferred from CoA to a specific serine of apo-ACP by AcpS. This modification is essential for activity because fatty acids are bound in thioester linkage to the sulfhydryl of the prosthetic group.

Its subcellular location is the cytoplasm. It functions in the pathway lipid metabolism; fatty acid biosynthesis. Carrier of the growing fatty acid chain in fatty acid biosynthesis. The polypeptide is Acyl carrier protein (Chloroherpeton thalassium (strain ATCC 35110 / GB-78)).